Here is a 490-residue protein sequence, read N- to C-terminus: Asparagine--tRNA ligase (490 aa).

Belongs to the class-II aminoacyl-tRNA synthetase family. Homodimer.

Its subcellular location is the cytoplasm. It carries out the reaction tRNA(Asn) + L-asparagine + ATP = L-asparaginyl-tRNA(Asn) + AMP + diphosphate + H(+). The chain is Asparagine--tRNA ligase from Rhodopirellula baltica (strain DSM 10527 / NCIMB 13988 / SH1).